The following is a 176-amino-acid chain: MFNFIDNVQTYSKEALQAAKYIGQGFMVTFDHMNRRAITIQYPYEKLIPSERFRGRIHFEFDKCIACEVCVRVCPINLPVVNWEFQKEKKKKQLQTYSIDFGVCIFCGNCVEYCPTNCLSMTEEYELSVYDRHELNYDNFALGRLPTMVNNDSMVKGIKGLGYLPKGIIEGHIDNQ.

4Fe-4S ferredoxin-type domains lie at 55 to 84 (GRIHFEFDKCIACEVCVRVCPINLPVVNWE) and 95 to 124 (QTYSIDFGVCIFCGNCVEYCPTNCLSMTEE). 8 residues coordinate [4Fe-4S] cluster: Cys64, Cys67, Cys70, Cys74, Cys104, Cys107, Cys110, and Cys114.

The protein belongs to the complex I 23 kDa subunit family. In terms of assembly, NDH is composed of at least 16 different subunits, 5 of which are encoded in the nucleus. [4Fe-4S] cluster is required as a cofactor.

It is found in the plastid. Its subcellular location is the chloroplast thylakoid membrane. It carries out the reaction a plastoquinone + NADH + (n+1) H(+)(in) = a plastoquinol + NAD(+) + n H(+)(out). The catalysed reaction is a plastoquinone + NADPH + (n+1) H(+)(in) = a plastoquinol + NADP(+) + n H(+)(out). Its function is as follows. NDH shuttles electrons from NAD(P)H:plastoquinone, via FMN and iron-sulfur (Fe-S) centers, to quinones in the photosynthetic chain and possibly in a chloroplast respiratory chain. The immediate electron acceptor for the enzyme in this species is believed to be plastoquinone. Couples the redox reaction to proton translocation, and thus conserves the redox energy in a proton gradient. The chain is NAD(P)H-quinone oxidoreductase subunit I, chloroplastic from Mesostigma viride (Green alga).